A 176-amino-acid chain; its full sequence is Disulfide bond formation protein B (176 aa).

At Met1–Gln11 the chain is on the cytoplasmic side. Residues Val12 to Phe28 form a helical membrane-spanning segment. The Periplasmic segment spans residues Leu29–Ile46. A disulfide bond links Cys38 and Cys41. Residues Gly47 to Pro63 traverse the membrane as a helical segment. Topologically, residues Lys64–Leu70 are cytoplasmic. A helical membrane pass occupies residues Leu71–Gly88. Residues Arg89 to Glu145 lie on the Periplasmic side of the membrane. Cysteines 104 and 131 form a disulfide. A helical transmembrane segment spans residues Gln146–Arg164. Residues Ile165 to Arg176 lie on the Cytoplasmic side of the membrane.

It belongs to the DsbB family.

Its subcellular location is the cell inner membrane. In terms of biological role, required for disulfide bond formation in some periplasmic proteins. Acts by oxidizing the DsbA protein. This is Disulfide bond formation protein B from Psychrobacter cryohalolentis (strain ATCC BAA-1226 / DSM 17306 / VKM B-2378 / K5).